We begin with the raw amino-acid sequence, 1394 residues long: Kinesin-like protein KIF27 (1394 aa).

Residues 5-341 (PIKVAVRIRP…LKYANRARNI (337 aa)) enclose the Kinesin motor domain. Residue 84–91 (GQTGSGKT) coordinates ATP. Coiled coils occupy residues 352 to 418 (QADR…IEQA) and 493 to 554 (QVVF…ELAK). Disordered stretches follow at residues 551–583 (ELAKRSSSMPTSTKESCGDGPDARAPEKRPHTA) and 642–664 (FSDNSDDEDSEGQEKPRVRSRSH). Polar residues predominate over residues 555 to 565 (RSSSMPTSTKE). Over residues 571 to 580 (PDARAPEKRP) the composition is skewed to basic and acidic residues. Phosphoserine occurs at positions 643, 646, 672, 675, and 704. Residues 709 to 980 (LQKLRTSELI…NKKLRSSQAL (272 aa)) adopt a coiled-coil conformation. Ser999 is subject to Phosphoserine. Coiled coils occupy residues 1010–1078 (TEEK…SIQN), 1118–1152 (NKVINLREAERKQQLQNKEMKMKVLERDNMVHELE), and 1187–1226 (QDGEGIIETLNKYEDKIQQLEKDLYFYKKTSRDLKKRLKD). The span at 1267–1280 (TENTKLNGREKEVD) shows a compositional bias: basic and acidic residues. The tract at residues 1267–1340 (TENTKLNGRE…SQSPPPPQLQ (74 aa)) is disordered. 2 stretches are compositionally biased toward polar residues: residues 1281 to 1295 (NSSSSLKTPPLTQQI) and 1310 to 1320 (APSSGQLQSSA). Residues Ser1365 and Ser1387 each carry the phosphoserine modification. The disordered stretch occupies residues 1375–1394 (SLGAGVRSVTADSLEEPEES).

This sequence belongs to the TRAFAC class myosin-kinesin ATPase superfamily. Kinesin family. KIF27 subfamily. In terms of assembly, interacts with STK36.

It is found in the cytoplasm. The protein resides in the cytoskeleton. The protein localises to the cell projection. Its subcellular location is the cilium. Its function is as follows. Plays an essential role in motile ciliogenesis. The protein is Kinesin-like protein KIF27 (Kif27) of Rattus norvegicus (Rat).